The sequence spans 498 residues: Dynein regulatory complex subunit 5 (498 aa).

Disordered regions lie at residues 27–52 (ALGSSSTGPTSLKTSSTPTPGQLKTK) and 200–223 (MPTPLQGEEQSDSGSEGEGSEPEK). Residues 28–47 (LGSSSTGPTSLKTSSTPTPG) show a composition bias toward low complexity. LRR repeat units lie at residues 276-299 (CHTLKIFKLTRSKVDDDKARILIR), 306-327 (ALEELDLSHNLIGDRGARAAAK), 333-353 (RLRVLNLANNQLQAPGAQSLA), 361-382 (NLVFLNLRLNCIEDEGGQAIAH), 389-409 (CLSVLHLGGNKLSEPTATLLS), and 417-438 (TLVSLNLSCNHIGQDGGKQLLE).

This sequence belongs to the DRC5 family. Component of the nexin-dynein regulatory complex (N-DRC). Interacts with DRC1. Interacts with FBXL13/DRC6, DRC3 and DRC7. As to expression, testis-specific (at protein level).

Its subcellular location is the cell projection. The protein localises to the cilium. It localises to the flagellum. It is found in the cytoplasm. The protein resides in the cytoskeleton. Its subcellular location is the flagellum axoneme. In terms of biological role, component of the nexin-dynein regulatory complex (N-DRC) a key regulator of ciliary/flagellar motility which maintains the alignment and integrity of the distal axoneme and regulates microtubule sliding in motile axonemes. May play a role in the assembly of N-DRC. Required for sperm motility. This is Dynein regulatory complex subunit 5 (Tcte1) from Mus musculus (Mouse).